A 551-amino-acid polypeptide reads, in one-letter code: Arginine--tRNA ligase (551 aa).

Residues 123–133 carry the 'HIGH' region motif; it reads ANPTGPLTIGR.

The protein belongs to the class-I aminoacyl-tRNA synthetase family. Monomer.

The protein resides in the cytoplasm. It carries out the reaction tRNA(Arg) + L-arginine + ATP = L-arginyl-tRNA(Arg) + AMP + diphosphate. This chain is Arginine--tRNA ligase, found in Chlorobium limicola (strain DSM 245 / NBRC 103803 / 6330).